We begin with the raw amino-acid sequence, 349 residues long: N-acetyltaurine hydrolase (349 aa).

A divalent metal cation is bound by residues His-26, His-28, Glu-169, His-201, His-230, and Asp-298.

The protein belongs to the metallo-dependent hydrolases superfamily. Phosphotriesterase family. A divalent metal cation serves as cofactor.

Its subcellular location is the cytoplasm. It is found in the cytosol. The enzyme catalyses N-acetyltaurine + H2O = taurine + acetate. It catalyses the reaction N-propanoyltaurine + H2O = propanoate + taurine. It carries out the reaction N-acetyl-L-methionine + H2O = L-methionine + acetate. The catalysed reaction is N-acetyl-L-isoleucine + H2O = L-isoleucine + acetate. The enzyme catalyses N-acetyl-L-leucine + H2O = L-leucine + acetate. It catalyses the reaction N-acetyl-L-valine + H2O = L-valine + acetate. Functionally, N-acetyltaurine hydrolase that catalyzes the hydrolysis of N-acetyltaurine into taurine and acetate. PTER also acts on other N-acetyl amino acids (Met, Ile, Leu, Val) and N-propionyltaurine, but at lower rates. In Tetraodon nigroviridis (Spotted green pufferfish), this protein is N-acetyltaurine hydrolase (pter).